A 311-amino-acid chain; its full sequence is Pyrimidine-specific ribonucleoside hydrolase RihA (311 aa).

The active site involves histidine 240.

It belongs to the IUNH family. RihA subfamily.

Its function is as follows. Hydrolyzes cytidine or uridine to ribose and cytosine or uracil, respectively. In Shigella flexneri serotype 5b (strain 8401), this protein is Pyrimidine-specific ribonucleoside hydrolase RihA.